The chain runs to 202 residues: Dephospho-CoA kinase (202 aa).

One can recognise a DPCK domain in the interval 5 to 202; the sequence is IVGLTGGIAS…DADYRARANP (198 aa). Residue 13-18 participates in ATP binding; the sequence is ASGKSA.

Belongs to the CoaE family.

The protein localises to the cytoplasm. It carries out the reaction 3'-dephospho-CoA + ATP = ADP + CoA + H(+). The protein operates within cofactor biosynthesis; coenzyme A biosynthesis; CoA from (R)-pantothenate: step 5/5. Its function is as follows. Catalyzes the phosphorylation of the 3'-hydroxyl group of dephosphocoenzyme A to form coenzyme A. The protein is Dephospho-CoA kinase of Xanthomonas axonopodis pv. citri (strain 306).